Reading from the N-terminus, the 94-residue chain is CRISPR-associated endoribonuclease Cas2 (94 aa).

Asp-10 is a binding site for Mg(2+).

The protein belongs to the CRISPR-associated endoribonuclease Cas2 protein family. Homodimer, forms a heterotetramer with a Cas1 homodimer. Requires Mg(2+) as cofactor.

Its function is as follows. CRISPR (clustered regularly interspaced short palindromic repeat), is an adaptive immune system that provides protection against mobile genetic elements (viruses, transposable elements and conjugative plasmids). CRISPR clusters contain sequences complementary to antecedent mobile elements and target invading nucleic acids. CRISPR clusters are transcribed and processed into CRISPR RNA (crRNA). Functions as a ssRNA-specific endoribonuclease. Involved in the integration of spacer DNA into the CRISPR cassette. In Leptospira interrogans serogroup Icterohaemorrhagiae serovar Lai (strain 56601), this protein is CRISPR-associated endoribonuclease Cas2.